The following is an 830-amino-acid chain: DNA replication licensing factor MCM6 (830 aa).

Residues 159–186 (CLDCGNVVKNVEQQFKYTEPIICVNATC) form a C4-type zinc finger. In terms of domain architecture, MCM spans 349–555 (FFNKIVDSIC…NTDYHIAHHI (207 aa)). ATP is bound at residue 399 to 406 (GDPSCAKS). An Arginine finger motif is present at residues 531-534 (SRFD). The tract at residues 671–710 (DFQDADDGTNVPADNDAGQPTEMDAAPQQDGPENEQAADT) is disordered.

The protein belongs to the MCM family. Component of the minichromosome maintenance (MCM) complex, a heterotetramer composed of MCM2, MCM3, MCM4, MCM5, MCM6 and MCM7.

The protein localises to the nucleus. The enzyme catalyses ATP + H2O = ADP + phosphate + H(+). Its function is as follows. Probable component of the MCM2-7 complex (MCM complex) that may function as a DNA helicase and which is essential to undergo a single round of replication initiation and elongation per cell cycle in eukaryotic cells. This Oryza sativa subsp. indica (Rice) protein is DNA replication licensing factor MCM6 (MCM6).